Reading from the N-terminus, the 821-residue chain is MDPECAQLLPALCAVLVDPRQPVADDTCLEKLLDWFKTVTEGESSVVLLQEHPCLVELLSHVLKVQDLSSGVLSFSLRLAGTFAAQENCFQYLQQGELLPGLFGEPGPLGRATWAVPTVRSGWIQGLRSLAQHPSALRFLADHGAVDTIFSLQGDSSLFVASAASQLLVHVLALSMRGGAEGQPCLPGGDWPACAQKIMDHVEESLCSAATPKVTQALNVLTTTFGRCQSPWTEALWVRLSPRVACLLERDPIPAAHSFVDLLLCVARSPVFSSSDGSLWETVARALSCLGPTHMGPLALGILKLEHCPQALRTQAFQVLLQPLACVLKATVQAPGPPGLLDGTADDATTVDTLLASKSSCAGLLCRTLAHLEELQPLPQRPSPWPQASLLGATVTVLRLCDGSAAPASSVGGHLCGTLAGCVRVQRAALDFLGTLSQGTGPQELVTQALAVLLECLESPGSSPTVLKKAFQATLRWLLSSPKTPGCSDLGPLIPQFLRELFPVLQKRLCHPCWEVRDSALEFLTQLSRHWGGQADFRCALLASEVPQLALQLLQDPESYVRASAVTAMGQLSSQGLHAPTSPEHAEARQSLFLELLHILSVDSEGFPRRAVMQVFTEWLRDGHADAAQDTEQFVATVLQAASRDLDWEVRAQGLELALVFLGQTLGPPRTHCPYAVALPEVAPAQPLTEALRALCHVGLFDFAFCALFDCDRPVAQKSCDLLLFLRDKIASYSSLREARGSPNTASAEATLPRWRAGEQAQPPGDQEPEAVLAMLRSLDLEGLRSTLAESSDHVEKSPQSLLQDMLATGGFLQGDEADCY.

The segment at 100–200 (PGLFGEPGPL…WPACAQKIMD (101 aa)) is required for interaction with NDFIP1. HEAT repeat units follow at residues 495–531 (PQFL…SRHW) and 544–576 (SEVP…SSQG). Residues 741-767 (GSPNTASAEATLPRWRAGEQAQPPGDQ) form a disordered region. Serine 742 carries the phosphoserine modification. The BRAT1-like motif motif lies at 819 to 821 (DCY). A Zn(2+)-binding site is contributed by cysteine 820.

The protein belongs to the BRAT1 family. Part of the multiprotein complex composed of BRAT1, WDR73, as well as integrator complex subunits INTS9 and INTS11. Interacts with BRCA1 and ATM. Interacts with MTOR and RPTOR. Interacts with NDFIP1. Interacts with SMC1A and PRKDC. Post-translationally, ubiquitinated by NEDD4, NEDD4L and ITCH; mono- and polyubiquitinated forms are detected. In terms of tissue distribution, ubiquitously expressed.

It is found in the nucleus. Its subcellular location is the cytoplasm. Its function is as follows. Component of a multiprotein complex required for the assembly of the RNA endonuclease module of the integrator complex. Associates with INTS9 and INTS11 in the cytoplasm and blocks the active site of INTS11 to inhibit the endonuclease activity of INTS11 before formation of the full integrator complex. Following dissociation of WDR73 of the complex, BRAT1 facilitates the nuclear import of the INTS9-INTS11 heterodimer. In the nucleus, INTS4 is integrated to the INTS9-INTS11 heterodimer and BRAT1 is released from the mature RNA endonuclease module by inositol hexakisphosphate (InsP6). BRAT1 is also involved in DNA damage response; activates kinases ATM, SMC1A and PRKDC by modulating their phosphorylation status following ionizing radiation (IR) stress. Plays a role in regulating mitochondrial function and cell proliferation. Required for protein stability of MTOR and MTOR-related proteins, and cell cycle progress by growth factors. The sequence is that of Integrator complex assembly factor BRAT1 from Homo sapiens (Human).